The primary structure comprises 2145 residues: Mediator of RNA polymerase II transcription subunit 12-like protein (2145 aa).

Residues 1-30 (MAAFGLLSYEQRPLKRPRLGPPDVYPQDPK) are disordered. Position 462 is a phosphothreonine (Thr-462). Over residues 1436 to 1455 (ELEKGQHLGSSSKKERDRQK) the composition is skewed to basic and acidic residues. Disordered regions lie at residues 1436-1460 (ELEK…KSMS), 1721-1802 (RSYY…ISSQ), and 2029-2145 (DAVL…PSHF). The span at 1768 to 1777 (TKGRKRKTKS) shows a compositional bias: basic residues. Low complexity predominate over residues 2052 to 2069 (RQPQVRQQQRLLQMQQPQ). Pro residues predominate over residues 2070-2079 (QPQPQQPPQP). The segment covering 2089–2099 (TLGLQAMQPQQ) has biased composition (polar residues). The segment covering 2104 to 2124 (RQGLQQTQQQQQTAALVRQLQ) has biased composition (low complexity). The segment covering 2125–2136 (KQLSSNQPQQGV) has biased composition (polar residues).

It belongs to the Mediator complex subunit 12 family. In terms of assembly, may be a component of the Mediator complex, which is known to be composed of MED1, MED4, MED6, MED7, MED8, MED9, MED10, MED11, MED12, MED13, MED13L, MED14, MED15, MED16, MED17, MED18, MED19, MED20, MED21, MED22, MED23, MED24, MED25, MED26, MED27, MED29, MED30, MED31, CCNC, CDK8 and CDC2L6/CDK11. The MED12, MED13, CCNC and CDK8 subunits form a distinct module termed the CDK8 module. Mediator containing the CDK8 module is less active than Mediator lacking this module in supporting transcriptional activation. Individual preparations of the Mediator complex lacking one or more distinct subunits have been variously termed ARC, CRSP, DRIP, PC2, SMCC and TRAP.

It localises to the nucleus. Its function is as follows. May be a component of the Mediator complex, a coactivator involved in the regulated transcription of nearly all RNA polymerase II-dependent genes. Mediator functions as a bridge to convey information from gene-specific regulatory proteins to the basal RNA polymerase II transcription machinery. Mediator is recruited to promoters by direct interactions with regulatory proteins and serves as a scaffold for the assembly of a functional preinitiation complex with RNA polymerase II and the general transcription factors. The chain is Mediator of RNA polymerase II transcription subunit 12-like protein (MED12L) from Homo sapiens (Human).